Consider the following 380-residue polypeptide: Phosphate acyltransferase (380 aa).

Residues 1–23 form a disordered region; the sequence is MPSPPPTPETATASDRTATPAPG.

Belongs to the PlsX family. As to quaternary structure, homodimer. Probably interacts with PlsY.

It is found in the cytoplasm. It catalyses the reaction a fatty acyl-[ACP] + phosphate = an acyl phosphate + holo-[ACP]. The protein operates within lipid metabolism; phospholipid metabolism. Its function is as follows. Catalyzes the reversible formation of acyl-phosphate (acyl-PO(4)) from acyl-[acyl-carrier-protein] (acyl-ACP). This enzyme utilizes acyl-ACP as fatty acyl donor, but not acyl-CoA. In Acidiphilium cryptum (strain JF-5), this protein is Phosphate acyltransferase.